The chain runs to 525 residues: Cytochrome P450 4V2 (525 aa).

The chain crosses the membrane as a helical span at residues 13–33; it reads LLLWGAASAVSVAGATVLLNI. 2 residues coordinate heme: glutamate 329 and cysteine 467.

Belongs to the cytochrome P450 family. Heme is required as a cofactor.

It localises to the endoplasmic reticulum membrane. The catalysed reaction is dodecanoate + reduced [NADPH--hemoprotein reductase] + O2 = 12-hydroxydodecanoate + oxidized [NADPH--hemoprotein reductase] + H2O + H(+). It carries out the reaction tetradecanoate + reduced [NADPH--hemoprotein reductase] + O2 = 14-hydroxytetradecanoate + oxidized [NADPH--hemoprotein reductase] + H2O + H(+). It catalyses the reaction hexadecanoate + reduced [NADPH--hemoprotein reductase] + O2 = 16-hydroxyhexadecanoate + oxidized [NADPH--hemoprotein reductase] + H2O + H(+). The enzyme catalyses (5Z,8Z,11Z,14Z,17Z)-eicosapentaenoate + reduced [NADPH--hemoprotein reductase] + O2 = 20-hydroxy-(5Z,8Z,11Z,14Z,17Z)-eicosapentaenoate + oxidized [NADPH--hemoprotein reductase] + H2O + H(+). The catalysed reaction is (4Z,7Z,10Z,13Z,16Z,19Z)-docosahexaenoate + reduced [NADPH--hemoprotein reductase] + O2 = 22-hydroxy-(4Z,7Z,10Z,13Z,16Z,19Z)-docosahexaenoate + oxidized [NADPH--hemoprotein reductase] + H2O + H(+). It functions in the pathway lipid metabolism; fatty acid metabolism. With respect to regulation, inhibited by N-hydroxy-N'-(4-n-butyl-2-methylphenyl formamidine)(HET0016) with an IC(50) of 38 nM. A cytochrome P450 monooxygenase involved in fatty acid metabolism in the eye. Catalyzes the omega-hydroxylation of polyunsaturated fatty acids (PUFAs) docosahexaenoate (DHA) and its precursor eicosapentaenoate (EPA), and may contribute to the homeostasis of these retinal PUFAs. Omega hydroxylates saturated fatty acids such as laurate, myristate and palmitate, the catalytic efficiency decreasing in the following order: myristate &gt; laurate &gt; palmitate (C14&gt;C12&gt;C16). Mechanistically, uses molecular oxygen inserting one oxygen atom into a substrate, and reducing the second into a water molecule, with two electrons provided by NADPH via cytochrome P450 reductase (CPR; NADPH-ferrihemoprotein reductase). The protein is Cytochrome P450 4V2 (Cyp4v2) of Rattus norvegicus (Rat).